A 261-amino-acid chain; its full sequence is Leucyl/phenylalanyl-tRNA--protein transferase (261 aa).

The protein belongs to the L/F-transferase family.

Its subcellular location is the cytoplasm. It carries out the reaction N-terminal L-lysyl-[protein] + L-leucyl-tRNA(Leu) = N-terminal L-leucyl-L-lysyl-[protein] + tRNA(Leu) + H(+). The catalysed reaction is N-terminal L-arginyl-[protein] + L-leucyl-tRNA(Leu) = N-terminal L-leucyl-L-arginyl-[protein] + tRNA(Leu) + H(+). It catalyses the reaction L-phenylalanyl-tRNA(Phe) + an N-terminal L-alpha-aminoacyl-[protein] = an N-terminal L-phenylalanyl-L-alpha-aminoacyl-[protein] + tRNA(Phe). In terms of biological role, functions in the N-end rule pathway of protein degradation where it conjugates Leu, Phe and, less efficiently, Met from aminoacyl-tRNAs to the N-termini of proteins containing an N-terminal arginine or lysine. This is Leucyl/phenylalanyl-tRNA--protein transferase from Yersinia pestis bv. Antiqua (strain Antiqua).